The sequence spans 715 residues: Inducible lysine decarboxylase (715 aa).

K367 carries the post-translational modification N6-(pyridoxal phosphate)lysine.

It belongs to the Orn/Lys/Arg decarboxylase class-I family. As to quaternary structure, homodecamer. Interacts with RavA. Requires pyridoxal 5'-phosphate as cofactor.

The protein resides in the cytoplasm. It carries out the reaction L-lysine + H(+) = cadaverine + CO2. In Escherichia coli O157:H7, this protein is Inducible lysine decarboxylase (cadA).